A 307-amino-acid polypeptide reads, in one-letter code: Nicotinamide/nicotinic acid mononucleotide adenylyltransferase 2 (307 aa).

Residues Ser16 and Phe17 each contribute to the NAD(+) site. An ATP-binding site is contributed by His24. Residues Trp92 and Thr95 each coordinate NAD(+). Residues Cys164 and Cys165 are each lipidated (S-palmitoyl cysteine). Residues Gly200, Asp202, Leu212, Trp213, and Arg232 each coordinate NAD(+). Residue 271-274 (TKSR) coordinates ATP.

The protein belongs to the eukaryotic NMN adenylyltransferase family. As to quaternary structure, monomer. The cofactor is Mg(2+). Degraded in response to injured neurite. Degradation is caused by polyubiquitination by MYCBP2 after recognition by FBXO45. Post-translationally, palmitoylated; palmitoylation is required for membrane association.

It localises to the golgi apparatus membrane. The protein localises to the cytoplasmic vesicle membrane. Its subcellular location is the cytoplasm. It is found in the cell projection. The protein resides in the axon. The enzyme catalyses beta-nicotinamide D-ribonucleotide + ATP + H(+) = diphosphate + NAD(+). It carries out the reaction nicotinate beta-D-ribonucleotide + ATP + H(+) = deamido-NAD(+) + diphosphate. It participates in cofactor biosynthesis; NAD(+) biosynthesis; NAD(+) from nicotinamide D-ribonucleotide: step 1/1. Its pathway is cofactor biosynthesis; NAD(+) biosynthesis; deamido-NAD(+) from nicotinate D-ribonucleotide: step 1/1. Inhibited by P1-(adenosine-5')-P3-(nicotinamide-riboside-5')-triphosphate (Np3AD) and P1-(adenosine-5')-P4-(nicotinamide-riboside-5')-tetraphosphate (Np4AD). In terms of biological role, nicotinamide/nicotinate-nucleotide adenylyltransferase that acts as an axon maintenance factor. Axon survival factor required for the maintenance of healthy axons: acts by delaying Wallerian axon degeneration, an evolutionarily conserved process that drives the loss of damaged axons. Catalyzes the formation of NAD(+) from nicotinamide mononucleotide (NMN) and ATP. Can also use the deamidated form; nicotinic acid mononucleotide (NaMN) as substrate but with a lower efficiency. Cannot use triazofurin monophosphate (TrMP) as substrate. Also catalyzes the reverse reaction, i.e. the pyrophosphorolytic cleavage of NAD(+). For the pyrophosphorolytic activity prefers NAD(+), NADH and NaAD as substrates and degrades nicotinic acid adenine dinucleotide phosphate (NHD) less effectively. Fails to cleave phosphorylated dinucleotides NADP(+), NADPH and NaADP(+). Also acts as an activator of ADP-ribosylation by supporting the catalytic activity of PARP16 and promoting mono-ADP-ribosylation of ribosomes by PARP16. May be involved in the maintenance of axonal integrity. In Bos taurus (Bovine), this protein is Nicotinamide/nicotinic acid mononucleotide adenylyltransferase 2 (NMNAT2).